Here is a 674-residue protein sequence, read N- to C-terminus: Acetyl-coenzyme A synthetase (674 aa).

CoA-binding positions include arginine 201–arginine 204 and threonine 320. Residues glycine 396 to proline 398, aspartate 420 to threonine 425, aspartate 518, and arginine 533 each bind ATP. Serine 541 lines the CoA pocket. Arginine 544 lines the ATP pocket. Residue arginine 603 participates in CoA binding.

Belongs to the ATP-dependent AMP-binding enzyme family.

It carries out the reaction acetate + ATP + CoA = acetyl-CoA + AMP + diphosphate. This chain is Acetyl-coenzyme A synthetase (acsA), found in Dictyostelium discoideum (Social amoeba).